The sequence spans 499 residues: Bifunctional purine biosynthesis protein PurH (499 aa).

Residues 1-144 (MIKRALISVF…KNFKDVVVLT (144 aa)) enclose the MGS-like domain.

The protein belongs to the PurH family.

It carries out the reaction (6R)-10-formyltetrahydrofolate + 5-amino-1-(5-phospho-beta-D-ribosyl)imidazole-4-carboxamide = 5-formamido-1-(5-phospho-D-ribosyl)imidazole-4-carboxamide + (6S)-5,6,7,8-tetrahydrofolate. It catalyses the reaction IMP + H2O = 5-formamido-1-(5-phospho-D-ribosyl)imidazole-4-carboxamide. It participates in purine metabolism; IMP biosynthesis via de novo pathway; 5-formamido-1-(5-phospho-D-ribosyl)imidazole-4-carboxamide from 5-amino-1-(5-phospho-D-ribosyl)imidazole-4-carboxamide (10-formyl THF route): step 1/1. It functions in the pathway purine metabolism; IMP biosynthesis via de novo pathway; IMP from 5-formamido-1-(5-phospho-D-ribosyl)imidazole-4-carboxamide: step 1/1. This chain is Bifunctional purine biosynthesis protein PurH, found in Clostridium botulinum (strain 657 / Type Ba4).